Here is a 561-residue protein sequence, read N- to C-terminus: Potassium-transporting ATPase potassium-binding subunit (561 aa).

The next 10 helical transmembrane spans lie at 4 to 24 (IVMQDVFFVVLLLVLAVPLGI), 65 to 85 (AVSVLAFSAVGFVFVMAVLML), 133 to 153 (IGLTVQNFVSAATGIAVLFAV), 177 to 197 (LYILLPLSLVLALLLVSQGVV), 253 to 273 (FTNLIEMLAILLIPVALVVMF), 285 to 305 (AIMTAMMIVFVIGVVAITISE), 380 to 400 (GLYGMIGFIILTVFIAGLLVG), 417 to 437 (MVCLLILVPPLLTLFGTAVAV), 484 to 504 (MVGAVMMLLARFIPLVAALYL), and 528 to 548 (FIGLLIGVVVLVGALSFLPAL).

This sequence belongs to the KdpA family. The system is composed of three essential subunits: KdpA, KdpB and KdpC.

The protein localises to the cell membrane. Its function is as follows. Part of the high-affinity ATP-driven potassium transport (or Kdp) system, which catalyzes the hydrolysis of ATP coupled with the electrogenic transport of potassium into the cytoplasm. This subunit binds the extracellular potassium ions and delivers the ions to the membrane domain of KdpB through an intramembrane tunnel. The sequence is that of Potassium-transporting ATPase potassium-binding subunit from Listeria monocytogenes serotype 4a (strain HCC23).